We begin with the raw amino-acid sequence, 253 residues long: Glucosamine-6-phosphate deaminase (253 aa).

Aspartate 65 serves as the catalytic Proton acceptor; for enolization step. Asparagine 133 acts as the For ring-opening step in catalysis. The active-site Proton acceptor; for ring-opening step is the histidine 135. Residue glutamate 140 is the For ring-opening step of the active site.

Belongs to the glucosamine/galactosamine-6-phosphate isomerase family. NagB subfamily.

It carries out the reaction alpha-D-glucosamine 6-phosphate + H2O = beta-D-fructose 6-phosphate + NH4(+). The protein operates within amino-sugar metabolism; N-acetylneuraminate degradation; D-fructose 6-phosphate from N-acetylneuraminate: step 5/5. In terms of biological role, catalyzes the reversible isomerization-deamination of glucosamine 6-phosphate (GlcN6P) to form fructose 6-phosphate (Fru6P) and ammonium ion. The polypeptide is Glucosamine-6-phosphate deaminase (Corynebacterium glutamicum (strain R)).